Reading from the N-terminus, the 430-residue chain is Trigger factor (430 aa).

The 86-residue stretch at glycine 163–proline 248 folds into the PPIase FKBP-type domain.

It belongs to the FKBP-type PPIase family. Tig subfamily.

The protein localises to the cytoplasm. It catalyses the reaction [protein]-peptidylproline (omega=180) = [protein]-peptidylproline (omega=0). Its function is as follows. Involved in protein export. Acts as a chaperone by maintaining the newly synthesized protein in an open conformation. Functions as a peptidyl-prolyl cis-trans isomerase. The polypeptide is Trigger factor (Clostridium botulinum (strain Okra / Type B1)).